Here is a 188-residue protein sequence, read N- to C-terminus: Acireductone dioxygenase (188 aa).

H97, H99, E103, and H141 together coordinate Fe(2+). Residues H97, H99, E103, and H141 each coordinate Ni(2+).

Belongs to the acireductone dioxygenase (ARD) family. As to quaternary structure, monomer. Fe(2+) serves as cofactor. The cofactor is Ni(2+).

The enzyme catalyses 1,2-dihydroxy-5-(methylsulfanyl)pent-1-en-3-one + O2 = 3-(methylsulfanyl)propanoate + CO + formate + 2 H(+). The catalysed reaction is 1,2-dihydroxy-5-(methylsulfanyl)pent-1-en-3-one + O2 = 4-methylsulfanyl-2-oxobutanoate + formate + 2 H(+). Its pathway is amino-acid biosynthesis; L-methionine biosynthesis via salvage pathway; L-methionine from S-methyl-5-thio-alpha-D-ribose 1-phosphate: step 5/6. Its function is as follows. Catalyzes 2 different reactions between oxygen and the acireductone 1,2-dihydroxy-3-keto-5-methylthiopentene (DHK-MTPene) depending upon the metal bound in the active site. Fe-containing acireductone dioxygenase (Fe-ARD) produces formate and 2-keto-4-methylthiobutyrate (KMTB), the alpha-ketoacid precursor of methionine in the methionine recycle pathway. Ni-containing acireductone dioxygenase (Ni-ARD) produces methylthiopropionate, carbon monoxide and formate, and does not lie on the methionine recycle pathway. The protein is Acireductone dioxygenase of Xylella fastidiosa (strain M12).